Here is a 606-residue protein sequence, read N- to C-terminus: ATP-dependent rRNA helicase SPB4 (606 aa).

The Q motif signature appears at 7 to 35 (WDNLGFSLLPWIRTGLDVMGFETMTPVQA). The Helicase ATP-binding domain occupies 38 to 224 (IPMLAGNKDV…KTGLRNPVRI (187 aa)). 51 to 58 (SVTGSGKT) contacts ATP. The DEAD box signature appears at 172 to 175 (DEAD). One can recognise a Helicase C-terminal domain in the interval 248-404 (KLQLLVSILN…ELDLEVKGIT (157 aa)). Position 254 is a phosphoserine (S254). Residues 539–582 (KTLTKERKLERKEKMSLKRKAIEEELKAEELDENAEEERIKEDW) are a coiled coil.

The protein belongs to the DEAD box helicase family. DDX55/SPB4 subfamily. In terms of assembly, component of pre-60S ribosomal complexes.

The protein resides in the nucleus. Its subcellular location is the nucleolus. The catalysed reaction is ATP + H2O = ADP + phosphate + H(+). Functionally, ATP-binding RNA helicase involved in the biogenesis of 60S ribosomal subunits. Binds 90S pre-ribosomal particles and dissociates from pre-60S ribosomal particles after processing of 27SB pre-rRNA. Required for the normal formation of 18S rRNA through the processing of pre-rRNAs at sites A0, A1 and A2, and the normal formation of 25S and 5.8S rRNAs through the processing of pre-rRNAs at sites C1 and C2. Also required for recruitment of NOG2 to pre-ribosomes. The sequence is that of ATP-dependent rRNA helicase SPB4 from Saccharomyces cerevisiae (strain ATCC 204508 / S288c) (Baker's yeast).